The chain runs to 31 residues: Alcohol dehydrogenase 1 (31 aa).

Position 7 (Cys-7) interacts with Zn(2+).

Belongs to the zinc-containing alcohol dehydrogenase family. Class-P subfamily. Homodimer. The cofactor is Zn(2+).

The protein resides in the cytoplasm. It catalyses the reaction a primary alcohol + NAD(+) = an aldehyde + NADH + H(+). It carries out the reaction a secondary alcohol + NAD(+) = a ketone + NADH + H(+). The protein is Alcohol dehydrogenase 1 of Catharanthus roseus (Madagascar periwinkle).